Here is a 583-residue protein sequence, read N- to C-terminus: Pre-mRNA-processing protein 45 (583 aa).

Disordered stretches follow at residues 1–68 (MTSI…APED), 177–253 (KPKN…LTAE), 321–424 (MQQR…EQNR), and 519–583 (RGAA…DEEN). Basic and acidic residues predominate over residues 203–225 (TSRKNDRIMKIVERQQDPMEPPK). Residues 233–244 (RGPPSPPPPIMH) are compositionally biased toward pro residues. Positions 325 to 350 (LAEKEKAQKEEHLRALAQKAREERSR) are enriched in basic and acidic residues. Low complexity predominate over residues 367 to 377 (RSYSDASSRSR). Composition is skewed to basic and acidic residues over residues 386–424 (ARER…EQNR), 519–538 (RGAA…KDTA), and 569–583 (PDSR…DEEN).

It belongs to the SNW family. In terms of assembly, associated with the spliceosome.

The protein localises to the nucleus. Involved in pre-mRNA splicing. The sequence is that of Pre-mRNA-processing protein 45 (prp45) from Emericella nidulans (strain FGSC A4 / ATCC 38163 / CBS 112.46 / NRRL 194 / M139) (Aspergillus nidulans).